The chain runs to 296 residues: Aquaporin NIP1-1 (296 aa).

The residue at position 1 (Met1) is an N-acetylmethionine. 2 helical membrane passes run 57-77 (LIAE…SVVV) and 84-104 (VVTL…LIYS). The NPA 1 motif lies at 114–116 (NPA). The next 3 membrane-spanning stretches (helical) occupy residues 136 to 156 (VISQ…LFGL), 180 to 200 (AFTM…GVAT), and 205 to 225 (IGEL…LIAA). Residues 233–235 (NPG) carry the NPA 2 motif. The helical transmembrane segment at 249 to 269 (GIWIYLVAPTLGAIAGAWVYN) threads the bilayer. Phosphoserine is present on Ser286.

Belongs to the MIP/aquaporin (TC 1.A.8) family. NIP (TC 1.A.8.12) subfamily. In terms of tissue distribution, expressed in roots.

The protein resides in the membrane. In terms of biological role, water channel probably required to promote glycerol permeability and water transport across cell membranes. This chain is Aquaporin NIP1-1 (NIP1-1), found in Arabidopsis thaliana (Mouse-ear cress).